An 85-amino-acid polypeptide reads, in one-letter code: uncharacterized protein (85 aa).

This sequence belongs to the BolA/IbaG family.

This is an uncharacterized protein from Haemophilus influenzae (strain ATCC 51907 / DSM 11121 / KW20 / Rd).